Consider the following 312-residue polypeptide: Malate dehydrogenase (312 aa).

NAD(+)-binding positions include 7–13 (GASGGIG) and aspartate 34. Residues arginine 81 and arginine 87 each coordinate substrate. NAD(+) is bound by residues asparagine 94 and 117–119 (ITN). Residues asparagine 119 and arginine 153 each contribute to the substrate site. Histidine 177 acts as the Proton acceptor in catalysis. Residue methionine 227 coordinates NAD(+).

Belongs to the LDH/MDH superfamily. MDH type 1 family. Homodimer.

It carries out the reaction (S)-malate + NAD(+) = oxaloacetate + NADH + H(+). Catalyzes the reversible oxidation of malate to oxaloacetate. This chain is Malate dehydrogenase, found in Actinobacillus succinogenes (strain ATCC 55618 / DSM 22257 / CCUG 43843 / 130Z).